A 1108-amino-acid polypeptide reads, in one-letter code: Receptor-type guanylate cyclase gcy-20 (1108 aa).

An N-terminal signal peptide occupies residues 1–15; sequence MRILLLLLQNILVFC. The Extracellular segment spans residues 16–474; the sequence is QFLQTIKVGL…ECPADFVKEY (459 aa). Asn66, Asn131, Asn319, Asn341, Asn366, and Asn380 each carry an N-linked (GlcNAc...) asparagine glycan. The chain crosses the membrane as a helical span at residues 475–495; sequence LVYTIIAAFIVILALLAGCAG. Residues 483 to 803 form the Protein kinase domain; sequence FIVILALLAG…IEQVRSHLNG (321 aa). Residues 489 to 497 and Lys571 each bind ATP; that span reads LLAGCAGLL. The Cytoplasmic portion of the chain corresponds to 496-1108; it reads LLYTMHMKRK…QAGDNNSETV (613 aa). A Guanylate cyclase domain is found at 876 to 1006; sequence TIFFSDVVQF…DAVNTASRME (131 aa). Residues 1083-1108 form a disordered region; that stretch reads LEKNAEGSETSSLSVDQAGDNNSETV. Over residues 1089–1108 the composition is skewed to polar residues; it reads GSETSSLSVDQAGDNNSETV.

This sequence belongs to the adenylyl cyclase class-4/guanylyl cyclase family. As to expression, expressed asymmetrically in ASE left (ASEL) sensory neuron. Expressed in excretory gland and canal cell.

The protein localises to the cell membrane. It carries out the reaction GTP = 3',5'-cyclic GMP + diphosphate. Functionally, guanylate cyclase involved in the production of the second messenger cGMP. The polypeptide is Receptor-type guanylate cyclase gcy-20 (Caenorhabditis elegans).